The chain runs to 196 residues: Probable DNA-directed RNA polymerase subunit delta (196 aa).

One can recognise an HTH HARE-type domain in the interval 14–81 (LSMIEVAHEI…GDNVWGLRSW (68 aa)). Positions 119 to 150 (DDDDVIDYDDDDPEDEDLDNDYDDEDDDDDEG) are enriched in acidic residues. The segment at 119–196 (DDDDVIDYDD…DADLDEENQD (78 aa)) is disordered. Residues 151–161 (SHELKQYTKDL) are compositionally biased toward basic and acidic residues. 2 stretches are compositionally biased toward acidic residues: residues 162-176 (DDID…ELAD) and 186-196 (SDADLDEENQD).

It belongs to the RpoE family. As to quaternary structure, RNAP is composed of a core of 2 alpha, a beta and a beta' subunits. The core is associated with a delta subunit and one of several sigma factors.

Participates in both the initiation and recycling phases of transcription. In the presence of the delta subunit, RNAP displays an increased specificity of transcription, a decreased affinity for nucleic acids, and an increased efficiency of RNA synthesis because of enhanced recycling. This is Probable DNA-directed RNA polymerase subunit delta from Ligilactobacillus salivarius (strain UCC118) (Lactobacillus salivarius).